The sequence spans 345 residues: Dihydroorotate dehydrogenase (quinone) (345 aa).

FMN is bound by residues A65–K69 and T89. K69 contributes to the substrate binding site. Position 114-118 (N114–F118) interacts with substrate. Positions 142 and 175 each coordinate FMN. N175 lines the substrate pocket. Catalysis depends on S178, which acts as the Nucleophile. N180 is a binding site for substrate. The FMN site is built by K220 and T248. Residue N249–T250 coordinates substrate. FMN-binding positions include G271, G300, and Y321–T322.

This sequence belongs to the dihydroorotate dehydrogenase family. Type 2 subfamily. In terms of assembly, monomer. The cofactor is FMN.

The protein localises to the cell membrane. The catalysed reaction is (S)-dihydroorotate + a quinone = orotate + a quinol. The protein operates within pyrimidine metabolism; UMP biosynthesis via de novo pathway; orotate from (S)-dihydroorotate (quinone route): step 1/1. Its function is as follows. Catalyzes the conversion of dihydroorotate to orotate with quinone as electron acceptor. The protein is Dihydroorotate dehydrogenase (quinone) of Burkholderia cenocepacia (strain HI2424).